The sequence spans 137 residues: Putative pre-16S rRNA nuclease (137 aa).

The protein belongs to the YqgF nuclease family.

Its subcellular location is the cytoplasm. In terms of biological role, could be a nuclease involved in processing of the 5'-end of pre-16S rRNA. This Bacillus cereus (strain G9842) protein is Putative pre-16S rRNA nuclease.